The sequence spans 319 residues: Curved DNA-binding protein (319 aa).

Residues aspartate 5–arginine 69 form the J domain.

Its subcellular location is the cytoplasm. It is found in the nucleoid. DNA-binding protein that preferentially recognizes a curved DNA sequence. It is probably a functional analog of DnaJ; displays overlapping activities with DnaJ, but functions under different conditions, probably acting as a molecular chaperone in an adaptive response to environmental stresses other than heat shock. Lacks autonomous chaperone activity; binds native substrates and targets them for recognition by DnaK. Its activity is inhibited by the binding of CbpM. In Pseudomonas putida (strain ATCC 700007 / DSM 6899 / JCM 31910 / BCRC 17059 / LMG 24140 / F1), this protein is Curved DNA-binding protein.